The chain runs to 90 residues: Small ribosomal subunit protein bS16 (90 aa).

It belongs to the bacterial ribosomal protein bS16 family.

This Streptococcus gordonii (strain Challis / ATCC 35105 / BCRC 15272 / CH1 / DL1 / V288) protein is Small ribosomal subunit protein bS16.